Consider the following 561-residue polypeptide: Dihydroxy-acid dehydratase 2 (561 aa).

Cys-53 lines the [2Fe-2S] cluster pocket. Position 85 (Asp-85) interacts with Mg(2+). Cys-126 is a [2Fe-2S] cluster binding site. The Mg(2+) site is built by Asp-127 and Lys-128. At Lys-128 the chain carries N6-carboxylysine. Cys-195 is a [2Fe-2S] cluster binding site. Mg(2+) is bound at residue Glu-446. The active-site Proton acceptor is the Ser-472.

The protein belongs to the IlvD/Edd family. As to quaternary structure, homodimer. The cofactor is [2Fe-2S] cluster. Requires Mg(2+) as cofactor.

It catalyses the reaction (2R)-2,3-dihydroxy-3-methylbutanoate = 3-methyl-2-oxobutanoate + H2O. The catalysed reaction is (2R,3R)-2,3-dihydroxy-3-methylpentanoate = (S)-3-methyl-2-oxopentanoate + H2O. Its pathway is amino-acid biosynthesis; L-isoleucine biosynthesis; L-isoleucine from 2-oxobutanoate: step 3/4. It functions in the pathway amino-acid biosynthesis; L-valine biosynthesis; L-valine from pyruvate: step 3/4. In terms of biological role, functions in the biosynthesis of branched-chain amino acids. Catalyzes the dehydration of (2R,3R)-2,3-dihydroxy-3-methylpentanoate (2,3-dihydroxy-3-methylvalerate) into 2-oxo-3-methylpentanoate (2-oxo-3-methylvalerate) and of (2R)-2,3-dihydroxy-3-methylbutanoate (2,3-dihydroxyisovalerate) into 2-oxo-3-methylbutanoate (2-oxoisovalerate), the penultimate precursor to L-isoleucine and L-valine, respectively. The chain is Dihydroxy-acid dehydratase 2 from Acinetobacter baylyi (strain ATCC 33305 / BD413 / ADP1).